The primary structure comprises 216 residues: Probable nicotinate-nucleotide adenylyltransferase (216 aa).

Belongs to the NadD family.

The enzyme catalyses nicotinate beta-D-ribonucleotide + ATP + H(+) = deamido-NAD(+) + diphosphate. The protein operates within cofactor biosynthesis; NAD(+) biosynthesis; deamido-NAD(+) from nicotinate D-ribonucleotide: step 1/1. In terms of biological role, catalyzes the reversible adenylation of nicotinate mononucleotide (NaMN) to nicotinic acid adenine dinucleotide (NaAD). This chain is Probable nicotinate-nucleotide adenylyltransferase, found in Pelobacter propionicus (strain DSM 2379 / NBRC 103807 / OttBd1).